Here is a 350-residue protein sequence, read N- to C-terminus: Biotin synthase (350 aa).

Residues 38-256 (NHVQVSTLLS…IAVARIMMPE (219 aa)) enclose the Radical SAM core domain. The [4Fe-4S] cluster site is built by C53, C57, and C60. Residues C97, C128, C188, and R260 each coordinate [2Fe-2S] cluster.

Belongs to the radical SAM superfamily. Biotin synthase family. Homodimer. The cofactor is [4Fe-4S] cluster. Requires [2Fe-2S] cluster as cofactor.

It carries out the reaction (4R,5S)-dethiobiotin + (sulfur carrier)-SH + 2 reduced [2Fe-2S]-[ferredoxin] + 2 S-adenosyl-L-methionine = (sulfur carrier)-H + biotin + 2 5'-deoxyadenosine + 2 L-methionine + 2 oxidized [2Fe-2S]-[ferredoxin]. Its pathway is cofactor biosynthesis; biotin biosynthesis; biotin from 7,8-diaminononanoate: step 2/2. Functionally, catalyzes the conversion of dethiobiotin (DTB) to biotin by the insertion of a sulfur atom into dethiobiotin via a radical-based mechanism. The sequence is that of Biotin synthase from Aliivibrio fischeri (strain MJ11) (Vibrio fischeri).